Here is a 443-residue protein sequence, read N- to C-terminus: MSEMTPREIVSELNRHIIGQDKAKRAVAIALRNRWRRMQLEESLRVEVTPKNILMIGPTGVGKTEIARRLAKLANAPFIKVEATKFTEVGYVGKEVESIIRDLTDVAVKLTHQQAMEKVKFRAEELAEERVLDALLPPPRDAWGQAEQKEENSSTRQVFRKKLREGQLNDKEIEINVAVPQMGVEIMAPPGMEEMTNQLQGLFQNLAGDTKKKRKMKIKDALKALVEEEAAKLVNQEELKEQAIYNVENNGIVFIDEIDKICKRGEVSGPDVSREGVQRDLLPLIEGSTVSTKHGMVRTDHILFIASGAFQVAKPSDLIPELQGRLPIRVELEALSSNDFKRILTEPKASLTEQYVALMKTEQVDVQFTEDGIKQIADAAWQVNETTENIGARRLHTVLERLMDEISFDATEKAGQAFVIDAAYVKARLGELVEDEDLSRFIL.

Residues isoleucine 18, 60 to 65 (GVGKTE), aspartate 256, glutamate 321, and arginine 393 contribute to the ATP site.

Belongs to the ClpX chaperone family. HslU subfamily. A double ring-shaped homohexamer of HslV is capped on each side by a ring-shaped HslU homohexamer. The assembly of the HslU/HslV complex is dependent on binding of ATP.

It localises to the cytoplasm. Its function is as follows. ATPase subunit of a proteasome-like degradation complex; this subunit has chaperone activity. The binding of ATP and its subsequent hydrolysis by HslU are essential for unfolding of protein substrates subsequently hydrolyzed by HslV. HslU recognizes the N-terminal part of its protein substrates and unfolds these before they are guided to HslV for hydrolysis. This Vibrio cholerae serotype O1 (strain ATCC 39541 / Classical Ogawa 395 / O395) protein is ATP-dependent protease ATPase subunit HslU.